The primary structure comprises 137 residues: Transcription antitermination protein NusB (137 aa).

This sequence belongs to the NusB family.

In terms of biological role, involved in transcription antitermination. Required for transcription of ribosomal RNA (rRNA) genes. Binds specifically to the boxA antiterminator sequence of the ribosomal RNA (rrn) operons. This is Transcription antitermination protein NusB from Borreliella afzelii (strain PKo) (Borrelia afzelii).